We begin with the raw amino-acid sequence, 392 residues long: MTLLNSYFGDFGGMYVPQILMPALYQLEEEFIFSLKSSKFKIELSNLLENYAGRPTPLTLCRNLTKGTKTKIYLKREDLLHGGAHKTNQVLGQALLAKKMKKKEIIAETGAGQHGVAAAFSCALLNLKCRIYMGLKDINRQQQNVFRMKLMGAEVIPVKTGSGTLKDACNEALRDWSENYINAHYMLGTAAGPHPYPTIVKEFQSIIGKETKRQIVREENCLPNAVIACVGGGSNAIGIFSSFISDNSVSLIGVEPGGKGIHTNKHGAPLTHGETGIFFGMKTKIMQTEEGQIKESWSISAGLDFPAVGPEHAWLYSTKRAQYVSITDHEAVNAFRCLSKSEGIIPALESSHALAYALKLMNNHPQKNQILIVNISGRGDKDIETVKNFLKM.

Position 86 is an N6-(pyridoxal phosphate)lysine (K86).

This sequence belongs to the TrpB family. In terms of assembly, tetramer of two alpha and two beta chains. It depends on pyridoxal 5'-phosphate as a cofactor.

The catalysed reaction is (1S,2R)-1-C-(indol-3-yl)glycerol 3-phosphate + L-serine = D-glyceraldehyde 3-phosphate + L-tryptophan + H2O. Its pathway is amino-acid biosynthesis; L-tryptophan biosynthesis; L-tryptophan from chorismate: step 5/5. The beta subunit is responsible for the synthesis of L-tryptophan from indole and L-serine. This chain is Tryptophan synthase beta chain (trpB), found in Buchnera aphidicola subsp. Melaphis rhois.